The following is a 414-amino-acid chain: Phthiocerol/phthiodiolone dimycocerosyl transferase (414 aa).

The active-site Proton acceptor is histidine 118.

Belongs to the acyltransferase PapA5 family. As to quaternary structure, monomer. Interacts directly with the acyl carrier protein (ACP) domain of the mycocerosic acid synthase (mas) protein.

The catalysed reaction is 2 a mycocerosyl-[mycocerosic acid synthase] + a phthiocerol = a dimycocerosyl phthiocerol + 2 holo-[mycocerosic acid synthase].. It catalyses the reaction 2 a mycocerosyl-[mycocerosic acid synthase] + a phthiodiolone = a dimycocerosyl phthiodiolone + 2 holo-[mycocerosic acid synthase].. The enzyme catalyses 2 a mycocerosyl-[mycocerosic acid synthase] + a phenolphthiocerol = a dimycocerosyl phenolphthiocerol + 2 holo-[mycocerosic acid synthase].. Catalyzes diesterification of phthiocerol, phthiodiolone, and phenolphthiocerol with mycocerosic acids, the final step in the phthiocerol, phthiodiolone and phenolphthiocerol dimycocerosate esters (PDIM) synthesis. Can directly transfer the mycocerosate bound to the mycocerosic acid synthase (mas) onto the substrate alcohols. This Mycobacterium ulcerans (strain Agy99) protein is Phthiocerol/phthiodiolone dimycocerosyl transferase (papA5).